Consider the following 329-residue polypeptide: Glycerol-3-phosphate dehydrogenase [NAD(P)+] (329 aa).

Trp-11, Arg-31, and Lys-105 together coordinate NADPH. 3 residues coordinate sn-glycerol 3-phosphate: Lys-105, Gly-135, and Thr-137. Ala-139 is an NADPH binding site. The sn-glycerol 3-phosphate site is built by Lys-190, Asp-243, Ser-253, Arg-254, and Asn-255. The Proton acceptor role is filled by Lys-190. Residue Arg-254 coordinates NADPH. NADPH is bound by residues Val-277 and Glu-279.

The protein belongs to the NAD-dependent glycerol-3-phosphate dehydrogenase family.

The protein resides in the cytoplasm. The catalysed reaction is sn-glycerol 3-phosphate + NAD(+) = dihydroxyacetone phosphate + NADH + H(+). It catalyses the reaction sn-glycerol 3-phosphate + NADP(+) = dihydroxyacetone phosphate + NADPH + H(+). It functions in the pathway membrane lipid metabolism; glycerophospholipid metabolism. Catalyzes the reduction of the glycolytic intermediate dihydroxyacetone phosphate (DHAP) to sn-glycerol 3-phosphate (G3P), the key precursor for phospholipid synthesis. The polypeptide is Glycerol-3-phosphate dehydrogenase [NAD(P)+] (Maridesulfovibrio salexigens (strain ATCC 14822 / DSM 2638 / NCIMB 8403 / VKM B-1763) (Desulfovibrio salexigens)).